Reading from the N-terminus, the 395-residue chain is Immunity-related GTPase family M protein 2 (395 aa).

Residues 63 to 239 enclose the IRG-type G domain; it reads NKIKIAVTGD…PKLRETLQKD (177 aa). GTP-binding positions include 72 to 79, 97 to 101, and 179 to 181; these read DSGNGMSS, TGVVR, and KLD.

This sequence belongs to the TRAFAC class dynamin-like GTPase superfamily. IRG family. Ubiquitinated; polyubiquitinated in the cytosol, promoting Gbp1 recruitment to the T.gondii parasitophorous vacuole membranes.

It is found in the cytoplasmic vesicle membrane. The protein localises to the golgi apparatus membrane. Its subcellular location is the cytoplasm. It localises to the cytosol. The catalysed reaction is GTP + H2O = GDP + phosphate + H(+). Functionally, immunity-related GTPase that plays important roles in innate immunity and inflammatory response. Acts as a dynamin-like protein that binds to intracellular membranes and promotes remodeling and trafficking of those membranes. Required for clearance of acute protozoan and bacterial infections. Acts by participating to Tgtp1/Irgb6 and Gbp1-mediated parasite killing by promoting their accumulation on the T.gondii parasitophorous vacuole membranes. Also required for prolonged loading of ubiquitin and p62/Sqstm1 to parasitophorous vacuole membranes. Also acts as a key negative regulator of the inflammatory response by inhibiting the non-canonical inflammasome, thereby protecting against Casp11-driven septic shock during endotoxemia. The protein is Immunity-related GTPase family M protein 2 of Mus musculus (Mouse).